Reading from the N-terminus, the 269-residue chain is Shikimate dehydrogenase (NADP(+)) (269 aa).

Shikimate-binding positions include 14–16 (TLS) and threonine 60. Lysine 64 functions as the Proton acceptor in the catalytic mechanism. NADP(+) is bound at residue aspartate 76. The shikimate site is built by asparagine 85 and aspartate 100. Residues 122–126 (GAGGA) and methionine 208 contribute to the NADP(+) site. Position 210 (tyrosine 210) interacts with shikimate. Glycine 232 serves as a coordination point for NADP(+).

Belongs to the shikimate dehydrogenase family. In terms of assembly, homodimer.

The enzyme catalyses shikimate + NADP(+) = 3-dehydroshikimate + NADPH + H(+). It functions in the pathway metabolic intermediate biosynthesis; chorismate biosynthesis; chorismate from D-erythrose 4-phosphate and phosphoenolpyruvate: step 4/7. In terms of biological role, involved in the biosynthesis of the chorismate, which leads to the biosynthesis of aromatic amino acids. Catalyzes the reversible NADPH linked reduction of 3-dehydroshikimate (DHSA) to yield shikimate (SA). This is Shikimate dehydrogenase (NADP(+)) from Caldivirga maquilingensis (strain ATCC 700844 / DSM 13496 / JCM 10307 / IC-167).